The following is a 5634-amino-acid chain: Hemicentin-1 (5634 aa).

A signal peptide spans 1-21 (MIAQEVVHTVFLVALFRSSLA). Residues 41–216 (TLAFVFDVTG…EVLKWVEEAV (176 aa)) enclose the VWFA domain. 29 Ig-like C2-type domains span residues 431–517 (PKVT…FDVS), 520–607 (PPII…VFLT), 612–697 (PKVT…STLR), 702–788 (PKLV…LTLD), 793–883 (PVFI…TTVT), 890–976 (PLIG…TSVA), 981–1067 (PSIQ…VQLT), 1072–1166 (PRVF…VKLS), 1171–1254 (PKIQ…AEVT), 1261–1353 (PSVE…YNLK), 1357–1446 (PPVI…FSVN), 1451–1540 (PSIL…IKLT), 1545–1633 (PSIK…FHVD), 1638–1723 (PTIE…REIK), 1732–1820 (PAVE…FEVT), 1825–1913 (PTIK…TQLH), 1918–2006 (PSLD…YSLQ), 2011–2096 (PSIS…RDID), 2103–2189 (PNIM…YNVN), 2194–2284 (PSIY…YNLQ), 2289–2378 (PSIT…YDLS), 2383–2472 (PSII…FGLS), 2477–2565 (PHIV…FRLN), 2570–2661 (PTIA…YEVK), 2665–2762 (PPII…VNIQ), 2765–2863 (PSFQ…YDVH), 2867–2958 (PPVI…FNLN), 2962–3050 (PPSV…VSLT), and 3055–3145 (PSIK…FHLN). 2 disulfides stabilise this stretch: Cys-451–Cys-499 and Cys-541–Cys-591. O-linked (GalNAc...) threonine glycosylation is present at Thr-615. Disulfide bonds link Cys-633/Cys-681, Cys-723/Cys-772, Cys-814/Cys-867, Cys-911/Cys-960, Cys-1002/Cys-1051, Cys-1101/Cys-1150, Cys-1192/Cys-1240, Cys-1287/Cys-1337, Cys-1381/Cys-1430, Cys-1474/Cys-1524, and Cys-1568/Cys-1617. O-linked (GalNAc...) threonine glycans are attached at residues Thr-1292 and Thr-1386. O-linked (GalNAc...) threonine glycosylation occurs at Thr-1639. Intrachain disulfides connect Cys-1662-Cys-1711 and Cys-1755-Cys-1804. The O-linked (GalNAc...) threonine glycan is linked to Thr-1826. Disulfide bonds link Cys-1847–Cys-1897, Cys-1941–Cys-1990, Cys-2032–Cys-2082, Cys-2124–Cys-2173, Cys-2217–Cys-2268, Cys-2313–Cys-2362, Cys-2407–Cys-2456, Cys-2500–Cys-2549, Cys-2596–Cys-2645, Cys-2695–Cys-2744, Cys-2798–Cys-2847, Cys-2893–Cys-2942, Cys-2985–Cys-3034, and Cys-3080–Cys-3129. O-linked (GalNAc...) threonine glycosylation is present at Thr-3151. 15 Ig-like C2-type domains span residues 3155–3227 (PETE…VASN), 3244–3334 (PSVA…FNLN), 3339–3428 (PKIR…YSLQ), 3433–3515 (PNMD…GEVS), 3526–3614 (PHIN…YLVR), 3619–3707 (PNIA…FNLT), 3712–3798 (PSIG…IDLQ), 3803–3891 (PSIA…VDLT), 3896–3982 (PTIA…VTLR), 3987–4073 (PVIQ…VKLN), 4077–4163 (PPVI…STLT), 4168–4252 (PRIQ…RIVT), 4259–4332 (PTFT…AENS), 4347–4434 (PPVF…MSLT), and 4439–4526 (PIIT…VIVQ). 8 cysteine pairs are disulfide-bonded: Cys-3172–Cys-3223, Cys-3267–Cys-3318, Cys-3363–Cys-3412, Cys-3456–Cys-3505, Cys-3549–Cys-3598, Cys-3642–Cys-3691, Cys-3733–Cys-3782, and Cys-3824–Cys-3875. A glycan (O-linked (GalNAc...) threonine) is linked at Thr-3897. Disulfide bonds link Cys-3917–Cys-3966, Cys-4008–Cys-4057, Cys-4099–Cys-4147, Cys-4189–Cys-4238, Cys-4280–Cys-4327, Cys-4370–Cys-4418, Cys-4460–Cys-4508, Cys-4540–Cys-4577, Cys-4544–Cys-4582, Cys-4555–Cys-4567, Cys-4597–Cys-4634, Cys-4601–Cys-4639, Cys-4612–Cys-4624, Cys-4654–Cys-4691, Cys-4658–Cys-4696, Cys-4669–Cys-4681, Cys-4711–Cys-4748, Cys-4715–Cys-4753, Cys-4726–Cys-4738, Cys-4768–Cys-4805, Cys-4772–Cys-4810, Cys-4783–Cys-4795, Cys-4825–Cys-4862, Cys-4829–Cys-4867, and Cys-4840–Cys-4852. Residue Thr-4379 is glycosylated (O-linked (GalNAc...) threonine). TSP type-1 domains lie at 4528–4583 (HGGF…KLCP), 4585–4640 (DGHW…RPCP), 4642–4697 (HGVW…RHCP), 4699–4754 (DGRW…DPCP), 4756–4811 (HGNW…DMCP), and 4813–4868 (DGSW…QACP). The region spanning 4870 to 5092 (GPQRARGSVI…SKGDRSNQCP (223 aa)) is the Nidogen G2 beta-barrel domain. Residues 5106–5145 (DEDECTAGNPCSHTCHNAIGAYYCSCPKGLTIAADGRTCQ) enclose the EGF-like 1; calcium-binding domain. Disulfide bonds link Cys-5110-Cys-5120, Cys-5116-Cys-5129, and Cys-5131-Cys-5144. The EGF-like 2; calcium-binding domain occupies 5146-5189 (DIDECALGGHTCRAGQDCDNTIGSYRCVVHCGTGFRRTSDGLSC). In terms of domain architecture, EGF-like 3; calcium-binding spans 5191 to 5228 (DINECQESSPCHQRCFNVIGSFHCGCEAGYQLKGRKCI). Cystine bridges form between Cys-5195/Cys-5205, Cys-5201/Cys-5214, and Cys-5216/Cys-5227. The 41-residue stretch at 5229-5269 (DVNECRQNVCRPDQHCKNTRGGYKCIDLCPSGMTKAENGTC) folds into the EGF-like 4; calcium-binding domain. Positions 5271 to 5306 (DIDECKDGTHQCRYNQICENTRGSYRCACPRGYRSQ) constitute an EGF-like 5; calcium-binding domain. 8 disulfides stabilise this stretch: Cys-5275/Cys-5288, Cys-5282/Cys-5297, Cys-5318/Cys-5329, Cys-5325/Cys-5338, Cys-5340/Cys-5353, Cys-5435/Cys-5445, Cys-5441/Cys-5454, and Cys-5456/Cys-5469. One can recognise an EGF-like 6; calcium-binding domain in the interval 5314–5354 (DINECEQVPKPCAHQCSNSPGSFKCICLPGQQLLGDGKSCA). The region spanning 5431 to 5470 (DIDECQNRDTCQHECKNTIGSYQCVCPPGYRLMLNGKTCQ) is the EGF-like 7; calcium-binding domain.

As to expression, in the kidney, expressed in the glomerulus (at protein level). Expressed in whisker and hair follicles, eye, tongue, and splenic and lymph node conduits (at protein level). In the embryo, localizes to the cleavage furrow at the two-cell stage (at protein level). In neonatal skin, expressed throughout the dermis (at protein level). In adult skin, strongly concentrated at the dermal side of the basement membrane but not detectable in the deeper dermis. Shows tendon-specific localization at the myotendinous junction and is also detected in the perichondrium (at protein level). Expressed by chondrocytes residing in articular cartilage and the femoral growth plate of 52 week old mice (at protein level). Expressed in vascular endothelial cells in coronary arteries and sparsely in endocardial endothelium (at protein level). Expressed in skin, tongue, lung and eye. At 14.5 dpc, expressed in the vibrissae, dermis, forelimb, kidney, intestine, lung and iliac cartilage where expression is found mainly in mesenchymal cells.

It is found in the secreted. It localises to the extracellular space. The protein localises to the extracellular matrix. Its subcellular location is the basement membrane. The protein resides in the cytoplasm. It is found in the cell junction. It localises to the cleavage furrow. Its function is as follows. Involved in transforming growth factor beta-mediated rearrangement of the podocyte cytoskeleton which includes reduction of F-actin fibers and broadening, flattening and elongation of podocytes. Plays a role in basement membrane organization. May promote cleavage furrow maturation during cytokinesis in preimplantation embryos. May play a role in the architecture of adhesive and flexible epithelial cell junctions. May play a role during myocardial remodeling by imparting an effect on cardiac fibroblast migration. This chain is Hemicentin-1, found in Mus musculus (Mouse).